A 59-amino-acid chain; its full sequence is Potassium channel toxin alpha-KTx 4.1 (59 aa).

The N-terminal stretch at 1-22 (MKAFYGILIIFILISMIDLSKQ) is a signal peptide. Cystine bridges form between Cys-29–Cys-50, Cys-35–Cys-55, and Cys-39–Cys-57. The interaction with Ca(2+)-activated K(+) channels stretch occupies residues 48–55 (GKCMNGKC).

It belongs to the short scorpion toxin superfamily. Potassium channel inhibitor family. Alpha-KTx 04 subfamily. As to expression, expressed by the venom gland.

It is found in the secreted. In terms of biological role, potently blocks Kv1.1/KCNA1 (85%), Kv1.2/KCNA2 (91%), Kv1.3/KCNA3 (89%), Kv1.6/KCNA6 (94%), and Shaker (97%). This is Potassium channel toxin alpha-KTx 4.1 from Tityus serrulatus (Brazilian scorpion).